Here is a 103-residue protein sequence, read N- to C-terminus: Pro-glucagon (103 aa).

Belongs to the glucagon family.

It is found in the secreted. Plays a key role in glucose metabolism and homeostasis. Regulates blood glucose by increasing gluconeogenesis and decreasing glycolysis. The chain is Pro-glucagon (gcg) from Aquarana catesbeiana (American bullfrog).